We begin with the raw amino-acid sequence, 286 residues long: 4-hydroxybenzoate octaprenyltransferase (286 aa).

7 helical membrane passes run 21 to 40 (GTLL…AGGM), 95 to 115 (ILFV…NGLV), 142 to 162 (FLGI…TGEV), 167 to 187 (WWLF…YAMV), 210 to 230 (QIIG…GWSA), 235 to 255 (LYGL…MLIF), and 266 to 286 (FLNN…DYLI).

Belongs to the UbiA prenyltransferase family. It depends on Mg(2+) as a cofactor.

The protein resides in the cell inner membrane. It catalyses the reaction all-trans-octaprenyl diphosphate + 4-hydroxybenzoate = 4-hydroxy-3-(all-trans-octaprenyl)benzoate + diphosphate. It participates in cofactor biosynthesis; ubiquinone biosynthesis. In terms of biological role, catalyzes the prenylation of para-hydroxybenzoate (PHB) with an all-trans polyprenyl group. Mediates the second step in the final reaction sequence of ubiquinone-8 (UQ-8) biosynthesis, which is the condensation of the polyisoprenoid side chain with PHB, generating the first membrane-bound Q intermediate 3-octaprenyl-4-hydroxybenzoate. The chain is 4-hydroxybenzoate octaprenyltransferase from Shewanella baltica (strain OS185).